Here is a 168-residue protein sequence, read N- to C-terminus: Ribosome-binding factor A (168 aa).

A compositionally biased stretch (basic and acidic residues) spans 125–138 (RVREGAKHAGDSDP). The segment at 125–168 (RVREGAKHAGDSDPYRVLGEGDLEGPATGGPDVEDEGGANSHDR) is disordered.

The protein belongs to the RbfA family. Monomer. Binds 30S ribosomal subunits, but not 50S ribosomal subunits or 70S ribosomes.

It localises to the cytoplasm. Its function is as follows. One of several proteins that assist in the late maturation steps of the functional core of the 30S ribosomal subunit. Associates with free 30S ribosomal subunits (but not with 30S subunits that are part of 70S ribosomes or polysomes). Required for efficient processing of 16S rRNA. May interact with the 5'-terminal helix region of 16S rRNA. This is Ribosome-binding factor A from Mycolicibacterium gilvum (strain PYR-GCK) (Mycobacterium gilvum (strain PYR-GCK)).